Reading from the N-terminus, the 415-residue chain is Glutamyl-tRNA reductase (415 aa).

Substrate is bound by residues 49–52, S104, 109–111, and Q115; these read TCNR and EPQ. The Nucleophile role is filled by C50. 184-189 contributes to the NADP(+) binding site; the sequence is GAGEMI.

Belongs to the glutamyl-tRNA reductase family. In terms of assembly, homodimer.

It catalyses the reaction (S)-4-amino-5-oxopentanoate + tRNA(Glu) + NADP(+) = L-glutamyl-tRNA(Glu) + NADPH + H(+). It functions in the pathway porphyrin-containing compound metabolism; protoporphyrin-IX biosynthesis; 5-aminolevulinate from L-glutamyl-tRNA(Glu): step 1/2. Its function is as follows. Catalyzes the NADPH-dependent reduction of glutamyl-tRNA(Glu) to glutamate 1-semialdehyde (GSA). The sequence is that of Glutamyl-tRNA reductase from Neisseria meningitidis serogroup C / serotype 2a (strain ATCC 700532 / DSM 15464 / FAM18).